Here is a 162-residue protein sequence, read N- to C-terminus: Caveolin-2 (162 aa).

Topologically, residues 1-86 (MGLETEKADV…FEISKYVMYK (86 aa)) are cytoplasmic. Phosphotyrosine; by SRC is present on tyrosine 19. Phosphoserine is present on serine 20. At tyrosine 27 the chain carries Phosphotyrosine; by SRC. Serine 36 carries the phosphoserine modification. The helical intramembrane region spans 87-107 (FLTVFLAIPLAFAAGILFATL). The Cytoplasmic portion of the chain corresponds to 108–162 (SCLHIWIIMPFVKTCLMVLPSVQTIWKSVTDVIIAPLCTSVGRSLSSISLQLSHD).

Belongs to the caveolin family. As to quaternary structure, monomer or homodimer. Interacts with CAV1; the interaction forms a stable heterooligomeric complex that is required for targeting to lipid rafts and for caveolae formation. Tyrosine phosphorylated forms do not form heterooligomers with the Tyr-19-phosphorylated form existing as a monomer or dimer, and the Tyr-27-form as a monomer only. Interacts (tyrosine phosphorylated form) with the SH2 domain-containing proteins, RASA1, NCK1 and SRC. Interacts (tyrosine phosphorylated form) with INSR, the interaction (Tyr-27-phosphorylated form) is increased on insulin stimulation. Interacts (Tyr-19 phosphorylated form) with MAPK1 (phosphorylated form); the interaction, promoted by insulin, leads to nuclear location and MAPK1 activation. Interacts with STAT3; the interaction is increased on insulin-induced tyrosine phosphorylation leading to STAT activation. Post-translationally, phosphorylated on serine and tyrosine residues. Phosphorylation on Ser-36 appears to modulate mitosis in endothelial cells. Phosphorylation on both Tyr-19 and Tyr-27 is required for insulin-induced 'Ser-727' phosphorylation of STAT3 and its activation. Phosphorylation on Tyr-19 is required for insulin-induced phosphorylation of MAPK1 and DNA binding of STAT3. Tyrosine phosphorylation is induced by both EGF and insulin.

The protein resides in the nucleus. The protein localises to the cytoplasm. It localises to the golgi apparatus membrane. Its subcellular location is the cell membrane. It is found in the membrane. The protein resides in the caveola. In terms of biological role, may act as a scaffolding protein within caveolar membranes. Interacts directly with G-protein alpha subunits and can functionally regulate their activity. Acts as an accessory protein in conjunction with CAV1 in targeting to lipid rafts and driving caveolae formation. The Ser-36 phosphorylated form has a role in modulating mitosis in endothelial cells. Positive regulator of cellular mitogenesis of the MAPK signaling pathway. Required for the insulin-stimulated nuclear translocation and activation of MAPK1 and STAT3, and the subsequent regulation of cell cycle progression. The chain is Caveolin-2 (CAV2) from Eulemur macaco macaco (Black lemur).